A 172-amino-acid polypeptide reads, in one-letter code: Dual-action ribosomal maturation protein DarP (172 aa).

Belongs to the DarP family.

The protein localises to the cytoplasm. Functionally, member of a network of 50S ribosomal subunit biogenesis factors which assembles along the 30S-50S interface, preventing incorrect 23S rRNA structures from forming. Promotes peptidyl transferase center (PTC) maturation. In Ectopseudomonas mendocina (strain ymp) (Pseudomonas mendocina), this protein is Dual-action ribosomal maturation protein DarP.